The following is a 159-amino-acid chain: Small ribosomal subunit protein uS4 (159 aa).

One can recognise an S4 RNA-binding domain in the interval 106–158 (RRLQTIVYRMGLAKSIHHARQLIVHGHVAVAGRRVTSPGFLVPRELEDKISLI).

The protein belongs to the universal ribosomal protein uS4 family. In terms of assembly, part of the 30S ribosomal subunit. Contacts protein S5. The interaction surface between S4 and S5 is involved in control of translational fidelity.

In terms of biological role, one of the primary rRNA binding proteins, it binds directly to 16S rRNA where it nucleates assembly of the body of the 30S subunit. Functionally, with S5 and S12 plays an important role in translational accuracy. This chain is Small ribosomal subunit protein uS4, found in Pyrobaculum aerophilum (strain ATCC 51768 / DSM 7523 / JCM 9630 / CIP 104966 / NBRC 100827 / IM2).